A 390-amino-acid polypeptide reads, in one-letter code: uncharacterized protein (390 aa).

A run of 2 helical transmembrane segments spans residues 27 to 47 (GGLI…MEWI) and 356 to 376 (FGGF…LASF).

The protein belongs to the ERGIC family.

The protein resides in the membrane. This is an uncharacterized protein from Schizosaccharomyces pombe (strain 972 / ATCC 24843) (Fission yeast).